The primary structure comprises 316 residues: Acetylglutamate kinase (316 aa).

Residues Gly65–Gly66, Arg87, and Asn179 contribute to the substrate site.

This sequence belongs to the acetylglutamate kinase family. ArgB subfamily.

The protein localises to the cytoplasm. It carries out the reaction N-acetyl-L-glutamate + ATP = N-acetyl-L-glutamyl 5-phosphate + ADP. It participates in amino-acid biosynthesis; L-arginine biosynthesis; N(2)-acetyl-L-ornithine from L-glutamate: step 2/4. In terms of biological role, catalyzes the ATP-dependent phosphorylation of N-acetyl-L-glutamate. This Alkaliphilus metalliredigens (strain QYMF) protein is Acetylglutamate kinase.